The chain runs to 151 residues: 3-hydroxyacyl-[acyl-carrier-protein] dehydratase FabZ (151 aa).

The active site involves H54.

This sequence belongs to the thioester dehydratase family. FabZ subfamily.

The protein resides in the cytoplasm. It catalyses the reaction a (3R)-hydroxyacyl-[ACP] = a (2E)-enoyl-[ACP] + H2O. Involved in unsaturated fatty acids biosynthesis. Catalyzes the dehydration of short chain beta-hydroxyacyl-ACPs and long chain saturated and unsaturated beta-hydroxyacyl-ACPs. This Klebsiella pneumoniae (strain 342) protein is 3-hydroxyacyl-[acyl-carrier-protein] dehydratase FabZ.